Reading from the N-terminus, the 710-residue chain is Early transcription factor 82 kDa subunit (710 aa).

The protein belongs to the poxviridae VETF large subunit family. Heterodimer of a 70 kDa and a 82 kDa subunit. Part of the early transcription complex composed of ETF, RAP94/OPG109, and the DNA-directed RNA polymerase.

It is found in the virion. Acts with RNA polymerase to initiate transcription from early gene promoters. Is recruited by the RPO-associated protein of 94 kDa RAP94/OPG109 to form the early transcription complex, which also contains the core RNA polymerase. ETF heterodimer binds to early gene promoters. The protein is Early transcription factor 82 kDa subunit (OPG133) of Homo sapiens (Human).